Reading from the N-terminus, the 874-residue chain is Alanine--tRNA ligase (874 aa).

H565, H569, C666, and H670 together coordinate Zn(2+).

The protein belongs to the class-II aminoacyl-tRNA synthetase family. Zn(2+) is required as a cofactor.

The protein resides in the cytoplasm. The catalysed reaction is tRNA(Ala) + L-alanine + ATP = L-alanyl-tRNA(Ala) + AMP + diphosphate. In terms of biological role, catalyzes the attachment of alanine to tRNA(Ala) in a two-step reaction: alanine is first activated by ATP to form Ala-AMP and then transferred to the acceptor end of tRNA(Ala). Also edits incorrectly charged Ser-tRNA(Ala) and Gly-tRNA(Ala) via its editing domain. This is Alanine--tRNA ligase from Polynucleobacter asymbioticus (strain DSM 18221 / CIP 109841 / QLW-P1DMWA-1) (Polynucleobacter necessarius subsp. asymbioticus).